Consider the following 132-residue polypeptide: Small ribosomal subunit protein eS24 (132 aa).

Over residues 90–100 (RLAKHGLYEKK) the composition is skewed to basic and acidic residues. Residues 90 to 132 (RLAKHGLYEKKKTSRKQRKERKNRMKKVRGTAKANVGAGKKKD) form a disordered region. A compositionally biased stretch (basic residues) spans 101-119 (KTSRKQRKERKNRMKKVRG).

This sequence belongs to the eukaryotic ribosomal protein eS24 family. As to quaternary structure, component of the small ribosomal subunit. Part of the small subunit (SSU) processome, composed of more than 70 proteins and the RNA chaperone small nucleolar RNA (snoRNA) U3.

It localises to the cytoplasm. The protein resides in the nucleus. The protein localises to the nucleolus. Component of the small ribosomal subunit. The ribosome is a large ribonucleoprotein complex responsible for the synthesis of proteins in the cell. Required for processing of pre-rRNA and maturation of 40S ribosomal subunits. Part of the small subunit (SSU) processome, first precursor of the small eukaryotic ribosomal subunit. During the assembly of the SSU processome in the nucleolus, many ribosome biogenesis factors, an RNA chaperone and ribosomal proteins associate with the nascent pre-rRNA and work in concert to generate RNA folding, modifications, rearrangements and cleavage as well as targeted degradation of pre-ribosomal RNA by the RNA exosome. In Xenopus laevis (African clawed frog), this protein is Small ribosomal subunit protein eS24 (rps24).